The following is a 456-amino-acid chain: Phosphomannomutase (456 aa).

Ser-98 functions as the Phosphoserine intermediate in the catalytic mechanism. Mg(2+) contacts are provided by Ser-98, Asp-246, Asp-248, and Asp-250.

Belongs to the phosphohexose mutase family. It depends on Mg(2+) as a cofactor.

It catalyses the reaction alpha-D-mannose 1-phosphate = D-mannose 6-phosphate. It functions in the pathway nucleotide-sugar biosynthesis; GDP-alpha-D-mannose biosynthesis; alpha-D-mannose 1-phosphate from D-fructose 6-phosphate: step 2/2. Its pathway is bacterial outer membrane biogenesis; LPS O-antigen biosynthesis. Functionally, involved in GDP-mannose biosynthesis which serves as the activated sugar nucleotide precursor for mannose residues in cell surface polysaccharides. This enzyme participates in synthesis of the LPS O9 antigen. This is Phosphomannomutase (manB) from Escherichia coli.